Reading from the N-terminus, the 951-residue chain is Coiled-coil and C2 domain-containing protein 1A (951 aa).

4 disordered regions span residues 80–139 (CMRD…LETT), 185–266 (AIDE…RQRD), 306–346 (VDLS…PPPR), and 437–491 (NQDE…TRAQ). Residues 84-104 (PDEDEEEGTDEDDLEADDDLL) show a composition bias toward acidic residues. Residues Thr92, Thr204, and Thr206 each carry the phosphothreonine modification. Positions 201-210 (PASTPTYSPA) are enriched in low complexity. Ser208 carries the phosphoserine; by CDK1 modification. Ser253 and Ser324 each carry phosphoserine. A compositionally biased stretch (pro residues) spans 311-333 (LPPPPDQLPPDPPSPPSQPPTPA). A coiled-coil region spans residues 346–392 (RTLLEALEQRMERYQVAAAQAKSKGDQRKARMHERIVKQYQDAIRAH). Ser455 is subject to Phosphoserine. The segment covering 475-488 (SAPTAKAPPKATST) has biased composition (low complexity). Residues 484-517 (KATSTRAQQQLAFLEGRKKQLLQAALRAKQKNDV) are a coiled coil. One can recognise a C2 domain in the interval 637-771 (RFEQRTFSVI…EIACEVREIL (135 aa)). The segment at 818–841 (TQVAGPKGKAPPVPAPARESGNRS) is disordered.

Belongs to the CC2D1 family. Phosphorylation on Ser-208 by CDK1 promotes spindle pole localization and association with SCC1/RAD21.

It localises to the cytoplasm. The protein resides in the nucleus. The protein localises to the cytoskeleton. It is found in the microtubule organizing center. Its subcellular location is the centrosome. Its function is as follows. Transcription factor that binds specifically to the DRE (dual repressor element) and represses HTR1A gene transcription in neuronal cells. The combination of calcium and ATP specifically inactivates the binding with FRE. May play a role in the altered regulation of HTR1A associated with anxiety and major depression. Mediates HDAC-independent repression of HTR1A promoter in neuronal cell. Performs essential function in controlling functional maturation of synapses. Plays distinct roles depending on its localization. When cytoplasmic, acts as a scaffold protein in the PI3K/PDK1/AKT pathway. Repressor of HTR1A when nuclear. In the centrosome, regulates spindle pole localization of the cohesin subunit SCC1/RAD21, thereby mediating centriole cohesion during mitosis. The chain is Coiled-coil and C2 domain-containing protein 1A (CC2D1A) from Homo sapiens (Human).